Reading from the N-terminus, the 121-residue chain is Large ribosomal subunit protein bL19 (121 aa).

Belongs to the bacterial ribosomal protein bL19 family.

Its function is as follows. This protein is located at the 30S-50S ribosomal subunit interface and may play a role in the structure and function of the aminoacyl-tRNA binding site. The polypeptide is Large ribosomal subunit protein bL19 (Chlorobium phaeobacteroides (strain BS1)).